The following is a 1764-amino-acid chain: MPLMVLLLSQRTGGVAQLLSVHGLDTHRRNNLVLLDEDTAASCIAGQLVLLSLSTGARRYLPGRDGGGVGAVAVHPSRTLLAVGEKARPGPASAGPAVYIYSYPGLEVVKVLRGGTERAYSALAFDGERGDTLASVGHFPDFLLTLWDWRQEAIVLRAKAFSQDVYGVAFSPYFEGQLTTSGQGHIRFWRMASTFTGLKLQGAIGKFGNVELSDVAAFVELPDGKVLSSTETGELLLWDGGLIKVVLTRPGSRPCHDGPIEALLLDRPAGRVLSAGADGRVRMWDFGAVNDAEPREDSHSLELSPLDEVVVAEGAALSALLADSGGRRWVVADKAGNVYTVALPPAGPVGKGAVVTRVASHPAGAVAGLQLSARTHTALVASADGCLRALDYVSGAVLAEAATPQRITAFTPLPAASPACPGGAMTAATGYRDGVVRLHARCAEGLALVGVAKAHKGAVAALAVSADGGRLVSAGEDGSVFFFDLTAQPQPGTGVPGMPACGLLAPRAFIKLPSGSGTVTCGVWEAAEGGGVLLGTNRGTILSVPLPPPDLNTHHSYEWAAGTSAVSSYQLVVPKPKRPKKKKGKNDGEEGDKEGGEQDEGQGGEDKGGEQADGEGGSKEGGEEGRAAEEEEEEEADDEADGGAGGPSSTTGELISLTLAPNEPGALLVTAGGVGHAARKAWRVRMGEPLAAPLLEGFASAPVTCLAHAGPEGRLALLGSGDGLVRLQALEEPFGSAAPGALPLWEAPLHDMQSGRVSGLGLSHDGAYLVTAAADGALHLLALALPPELAPPPTTQPGDEPLPGPAALPLRPPDVLAAAAYTLEEEKQQAERDQQVREAEEKKLSVRQRLGLIRAEFEALLAENEAAPEALRLPRADLEVDPGLRALMEAEALRREEVARLELAWESERQRLGLAKLRRYFLDGLESERVVLHSLRGSSTVTTFRVAKLSDETRAELAAMRQAARAAAAASAAAGGEGGAGGRDTDARGKGSDTGGGPGGDAAARARLAEATAALEEGTASGKLNKADLRRLARKRREAEWAAFNGTRPDDTYDSPADLAAIEEARRTIGDFKLKSDPNYVVPEEERLTPQRKRLAMLELEEALHDIAAAFNAKFFALRDVKRKVLADVRVKLAALAELAAAAGAATGGADPDATAAAYLAPFSGLPSGLLPEEEPAEAREAVTDADLAAFAARKAEDERKAAAAAAGGLGGFAGAAAGPKKPAAGGAAPAGGALAGGAAGSGSVAHGAGGPSAGGQQGLTAAEEALAKMMAAVPQSELEKGLAAYNRRRVEHMRSKLSEEITAMLDAFDDAHSALKAEKLGLEADVKAGQMRLLVGLQELQLLREFDKRESVLLAKRQAKLDDKQEIVDKIAECTDKLETKRLELEGLVARRAAVVAELDAVVPESDPFREALVRVFHRRIKRSKKKAGGGGGEDDYDSEEDEEDEDMGDDEVDDDDDGGEEVCPPGCDQSVYERVCDLREKRLDEEDMIAEFTKTIEVLRKEKEALAKKQRLVEQGLAAVNADMAEFQKEKQGRLNQVEVIVALRMHQIEYLLDGCLPDDLSACLVFSASQLRRLQARVDELEEEKAGLRAAHKELRRQHAALLRDKADKEARVAELEARAHDVQMLKFGQVIDLELLDRVSSSRGTEELREDLKKQELAYARELAEWDAKINARMDELVVLTRENTACLNAVSELTAAQRRLESGLTATRKGLFADPVQQRRAEVEERDALVALVNAQAAELDRLKGQLLALRRKDTSMYA.

7 WD repeats span residues 115 to 157, 160 to 199, 208 to 248, 255 to 294, 361 to 400, 454 to 493, and 495 to 534; these read GTER…IVLR, AFSQ…TGLK, GNVE…VVLT, CHDG…DAEP, HPAG…VLAE, AHKG…QPGT, and VPGM…GVLL. Positions 570-654 are disordered; that stretch reads QLVVPKPKRP…GGPSSTTGEL (85 aa). The segment covering 575–584 has biased composition (basic residues); it reads KPKRPKKKKG. Composition is skewed to basic and acidic residues over residues 585–596 and 604–628; these read KNDGEEGDKEGG and GEDK…GRAA. Acidic residues predominate over residues 629-641; that stretch reads EEEEEEEADDEAD. 3 WD repeats span residues 649 to 692, 707 to 752, and 753 to 791; these read STTG…PLAA, AHAG…LHDM, and QSGR…ELAP. A coiled-coil region spans residues 821–850; it reads YTLEEEKQQAERDQQVREAEEKKLSVRQRL. Disordered regions lie at residues 972-1003 and 1426-1468; these read AAAG…GDAA and KKKA…CPPG. The span at 1434-1462 shows a compositional bias: acidic residues; that stretch reads GEDDYDSEEDEEDEDMGDDEVDDDDDGGE. Coiled-coil stretches lie at residues 1479–1517, 1567–1674, and 1729–1758; these read DLRE…LVEQ, LVFS…DAKI, and EERD…LRRK.

The protein belongs to the CFAP44 family.

The protein resides in the cell projection. The protein localises to the cilium. Its subcellular location is the flagellum. It localises to the cytoplasm. It is found in the cytoskeleton. The protein resides in the flagellum axoneme. Functionally, flagellar protein involved in sperm flagellum axoneme organization and function. The sequence is that of Cilia- and flagella-associated protein 44 from Chlamydomonas reinhardtii (Chlamydomonas smithii).